We begin with the raw amino-acid sequence, 214 residues long: Exosome complex component RRP46 homolog (214 aa).

This sequence belongs to the RNase PH family. Homodimer. Component of the RNA exosome complex. Interacts with crn-4; interaction promotes the DNase activity of crn-4. Interacts with crn-3, cps-6 and cyn-13.

It is found in the cytoplasm. Its subcellular location is the nucleus. Its function is as follows. Non-catalytic component of the RNA exosome complex which has 3'-&gt;5' exoribonuclease activity and participates in a multitude of cellular RNA processing and degradation events. Involved in apoptotic DNA degradation. In vitro, does not bind or digest single-stranded RNA. In vitro, binds to double-stranded DNA without detectable DNase activity. The sequence is that of Exosome complex component RRP46 homolog from Caenorhabditis elegans.